Here is a 718-residue protein sequence, read N- to C-terminus: uncharacterized protein (718 aa).

Helical transmembrane passes span 9–29 (VISTIPVFIAVNIAAVGIWFF), 60–80 (NVFFTLIAFSISSFIVQLHIG), 83–103 (IQYIVLMTVLTFIFTMIGAVG), 136–156 (VMILCGTLLYSVVTLIVYLFF), 391–411 (IVVFLCCAIVEFFQFNLGYWI), and 506–526 (LLDTLLGAAISWFAVSYLWPD).

The protein belongs to the YccS/YhfK family.

The protein localises to the cell membrane. This is an uncharacterized protein from Haemophilus influenzae (strain ATCC 51907 / DSM 11121 / KW20 / Rd).